The sequence spans 1275 residues: Surfactin synthase subunit 3 (1275 aa).

The 76-residue stretch at Gly-968–Gly-1043 folds into the Carrier domain. At Ser-1003 the chain carries O-(pantetheine 4'-phosphoryl)serine. The interval Gln-1059 to Thr-1271 is thioesterase. Active-site residues include Ser-1120, Asp-1147, and His-1247.

Belongs to the ATP-dependent AMP-binding enzyme family. Pantetheine 4'-phosphate is required as a cofactor.

It participates in antibiotic biosynthesis; surfactin biosynthesis. Its function is as follows. Probably activates a leucine. This is Surfactin synthase subunit 3 (srfAC) from Bacillus subtilis (strain 168).